Reading from the N-terminus, the 478-residue chain is Signal recognition particle receptor FtsY (478 aa).

Composition is skewed to basic and acidic residues over residues 14–33 and 45–56; these read KDKAETEERPQEDAALERGN and AEAHDAVDKDPV. The interval 14–94 is disordered; the sequence is KDKAETEERP…DAPLLPGAEL (81 aa). Residues 71–86 show a composition bias toward acidic residues; it reads EAVDVAPAEDDEEEDA. Residues 283–290, 365–369, and 429–432 each bind GTP; these read GVNGTGKT, DTAGR, and TKLD.

Belongs to the GTP-binding SRP family. FtsY subfamily. As to quaternary structure, part of the signal recognition particle protein translocation system, which is composed of SRP and FtsY. SRP is a ribonucleoprotein composed of Ffh and a 4.5S RNA molecule.

It localises to the cell inner membrane. It is found in the cytoplasm. It catalyses the reaction GTP + H2O = GDP + phosphate + H(+). In terms of biological role, involved in targeting and insertion of nascent membrane proteins into the cytoplasmic membrane. Acts as a receptor for the complex formed by the signal recognition particle (SRP) and the ribosome-nascent chain (RNC). Interaction with SRP-RNC leads to the transfer of the RNC complex to the Sec translocase for insertion into the membrane, the hydrolysis of GTP by both Ffh and FtsY, and the dissociation of the SRP-FtsY complex into the individual components. This chain is Signal recognition particle receptor FtsY, found in Agrobacterium fabrum (strain C58 / ATCC 33970) (Agrobacterium tumefaciens (strain C58)).